A 320-amino-acid chain; its full sequence is Cytochrome f (320 aa).

The first 35 residues, 1–35 (MQTRNTFSWIREEITRSISVSLMIYIITWASISSA), serve as a signal peptide directing secretion. Heme contacts are provided by tyrosine 36, cysteine 56, cysteine 59, and histidine 60. A helical transmembrane segment spans residues 286–306 (VQGLLFFLGSVVLAQIFLVLK).

This sequence belongs to the cytochrome f family. In terms of assembly, the 4 large subunits of the cytochrome b6-f complex are cytochrome b6, subunit IV (17 kDa polypeptide, petD), cytochrome f and the Rieske protein, while the 4 small subunits are PetG, PetL, PetM and PetN. The complex functions as a dimer. Heme is required as a cofactor.

It is found in the plastid. The protein localises to the chloroplast thylakoid membrane. Component of the cytochrome b6-f complex, which mediates electron transfer between photosystem II (PSII) and photosystem I (PSI), cyclic electron flow around PSI, and state transitions. This chain is Cytochrome f, found in Barbarea verna (Land cress).